Reading from the N-terminus, the 113-residue chain is MAMTTRTLLLAAVCAAAALPRGWSPIKNIDDPHIQELGRWAITENNRVSPSDELTFHRVTGGEQQVVSGMNYRLEIEAASGGGDVTGSYGAVVFEQEWSNTRKLISFDKNHNF.

Residues 1–18 (MAMTTRTLLLAAVCAAAA) form the signal peptide. The Secondary area of contact signature appears at 65-69 (QVVSG).

The protein belongs to the cystatin family. Phytocystatin subfamily.

The protein localises to the secreted. Specific inhibitor of cysteine proteinases. Probably involved in the regulation of endogenous processes and in defense against pests and pathogens. In Oryza sativa subsp. japonica (Rice), this protein is Cysteine proteinase inhibitor 6.